The sequence spans 477 residues: Transposase for insertion sequence element IS231F (477 aa).

Belongs to the transposase 11 family.

Functionally, involved in the transposition of the insertion sequence. The sequence is that of Transposase for insertion sequence element IS231F from Bacillus thuringiensis subsp. israelensis.